The sequence spans 568 residues: UPF0313 protein FN0734 (568 aa).

The Radical SAM core domain maps to Ala-289 to Glu-562. Positions 303, 307, and 310 each coordinate [4Fe-4S] cluster. The disordered stretch occupies residues Val-546–Lys-568.

The protein belongs to the UPF0313 family. Requires [4Fe-4S] cluster as cofactor.

The chain is UPF0313 protein FN0734 from Fusobacterium nucleatum subsp. nucleatum (strain ATCC 25586 / DSM 15643 / BCRC 10681 / CIP 101130 / JCM 8532 / KCTC 2640 / LMG 13131 / VPI 4355).